The sequence spans 185 residues: MYLFLSNLSLADISFTSTTLPKMIVDIQTNNRAISYSGCLTQMSFFMLFGCLDSLLLTAMAYDRFVAICHPLHYQVIMNPRLCGLLVFLSILISLLVSQLHNSVVLQLTYFKSVDISHFFCDPSLLLNLACSDTFTNNIVMYFVGAISGFLPISGIFFSYYKIVSSILRMPSPGGKYKAFSTCGS.

The helical transmembrane segment at 1 to 11 threads the bilayer; it reads MYLFLSNLSLA. Over 12-42 the chain is Extracellular; sequence DISFTSTTLPKMIVDIQTNNRAISYSGCLTQ. A helical transmembrane segment spans residues 43–62; it reads MSFFMLFGCLDSLLLTAMAY. At 63–84 the chain is on the cytoplasmic side; the sequence is DRFVAICHPLHYQVIMNPRLCG. A helical membrane pass occupies residues 85–105; sequence LLVFLSILISLLVSQLHNSVV. The Extracellular segment spans residues 106–138; that stretch reads LQLTYFKSVDISHFFCDPSLLLNLACSDTFTNN. The chain crosses the membrane as a helical span at residues 139-160; the sequence is IVMYFVGAISGFLPISGIFFSY. The Cytoplasmic portion of the chain corresponds to 161-182; that stretch reads YKIVSSILRMPSPGGKYKAFST. Residues 183 to 185 traverse the membrane as a helical segment; sequence CGS.

It belongs to the G-protein coupled receptor 1 family. In terms of tissue distribution, tongue specific.

Its subcellular location is the cell membrane. Its function is as follows. Possible taste receptor. The protein is Putative gustatory receptor clone PTE01 of Rattus norvegicus (Rat).